Consider the following 418-residue polypeptide: Intracellular coagulation inhibitor 1 (418 aa).

The signal sequence occupies residues 1–24 (MKLGDWKFCLLLFQLMFLTNVCLS). Residues Asn-49 and Asn-404 are each glycosylated (N-linked (GlcNAc...) asparagine).

Belongs to the serpin family. As to quaternary structure, monomer. Forms a covalent heterodimer with clotting factor C. Interacts with big defensin. In terms of processing, N-glycosylated. In terms of tissue distribution, expressed in hemocytes (at protein level).

The protein localises to the secreted. Serine protease inhibitor that specifically inhibits clotting factor C. Does not inhibit clotting factor B or proclotting enzyme. This is Intracellular coagulation inhibitor 1 from Tachypleus tridentatus (Japanese horseshoe crab).